The following is a 159-amino-acid chain: Urease accessory protein UreE (159 aa).

Belongs to the UreE family.

The protein localises to the cytoplasm. In terms of biological role, involved in urease metallocenter assembly. Binds nickel. Probably functions as a nickel donor during metallocenter assembly. The chain is Urease accessory protein UreE from Acinetobacter baylyi (strain ATCC 33305 / BD413 / ADP1).